A 148-amino-acid chain; its full sequence is Hemoglobin subunit beta (148 aa).

The region spanning D3 to H148 is the Globin domain. The heme b site is built by H64 and H93.

It belongs to the globin family. Heterotetramer of two alpha chains and two beta chains. Red blood cells.

Involved in oxygen transport from gills to the various peripheral tissues. This chain is Hemoglobin subunit beta (hbb), found in Salmo salar (Atlantic salmon).